A 290-amino-acid polypeptide reads, in one-letter code: UPF0761 membrane protein YihY (290 aa).

6 helical membrane-spanning segments follow: residues 44–64, 104–124, 140–160, 183–203, 210–230, and 244–264; these read LLSL…FPMF, VGAC…DSAL, FAVY…SLAI, IFPL…VPTI, AIVG…GFAL, and VLAV…IVLL.

Belongs to the UPF0761 family.

It is found in the cell inner membrane. In Shigella sonnei (strain Ss046), this protein is UPF0761 membrane protein YihY.